A 351-amino-acid chain; its full sequence is Phosphoribosylformylglycinamidine cyclo-ligase (351 aa).

The protein belongs to the AIR synthase family.

Its subcellular location is the cytoplasm. The enzyme catalyses 2-formamido-N(1)-(5-O-phospho-beta-D-ribosyl)acetamidine + ATP = 5-amino-1-(5-phospho-beta-D-ribosyl)imidazole + ADP + phosphate + H(+). It functions in the pathway purine metabolism; IMP biosynthesis via de novo pathway; 5-amino-1-(5-phospho-D-ribosyl)imidazole from N(2)-formyl-N(1)-(5-phospho-D-ribosyl)glycinamide: step 2/2. This Azotobacter vinelandii (strain DJ / ATCC BAA-1303) protein is Phosphoribosylformylglycinamidine cyclo-ligase.